The chain runs to 441 residues: Protein dcd1A (441 aa).

Residues 1-23 (MKIFNKLIFLIIQCILIISVTNA) form the signal peptide. 4 N-linked (GlcNAc...) asparagine glycosylation sites follow: asparagine 45, asparagine 261, asparagine 308, and asparagine 419.

Its subcellular location is the secreted. This Dictyostelium discoideum (Social amoeba) protein is Protein dcd1A (dcd1A).